The chain runs to 142 residues: Small ribosomal subunit protein uS9 (142 aa).

It belongs to the universal ribosomal protein uS9 family. As to quaternary structure, component of the small ribosomal subunit (SSU). Mature N.crassa ribosomes consist of a small (40S) and a large (60S) subunit. The 40S small subunit contains 1 molecule of ribosomal RNA (18S rRNA) and at least 32 different proteins. The large 60S subunit contains 3 rRNA molecules (26S, 5.8S and 5S rRNA) and at least 42 different proteins.

The protein resides in the cytoplasm. Component of the ribosome, a large ribonucleoprotein complex responsible for the synthesis of proteins in the cell. The small ribosomal subunit (SSU) binds messenger RNAs (mRNAs) and translates the encoded message by selecting cognate aminoacyl-transfer RNA (tRNA) molecules. The large subunit (LSU) contains the ribosomal catalytic site termed the peptidyl transferase center (PTC), which catalyzes the formation of peptide bonds, thereby polymerizing the amino acids delivered by tRNAs into a polypeptide chain. The nascent polypeptides leave the ribosome through a tunnel in the LSU and interact with protein factors that function in enzymatic processing, targeting, and the membrane insertion of nascent chains at the exit of the ribosomal tunnel. This chain is Small ribosomal subunit protein uS9 (rps-16), found in Neurospora crassa (strain ATCC 24698 / 74-OR23-1A / CBS 708.71 / DSM 1257 / FGSC 987).